The chain runs to 597 residues: DNA ligase (597 aa).

Glutamate 262 contributes to the ATP binding site. Lysine 264 (N6-AMP-lysine intermediate) is an active-site residue. The ATP site is built by arginine 269, arginine 284, glutamate 314, phenylalanine 354, arginine 431, and lysine 437.

Belongs to the ATP-dependent DNA ligase family. The cofactor is Mg(2+). Mn(2+) is required as a cofactor.

The catalysed reaction is ATP + (deoxyribonucleotide)n-3'-hydroxyl + 5'-phospho-(deoxyribonucleotide)m = (deoxyribonucleotide)n+m + AMP + diphosphate.. The enzyme catalyses ADP + (deoxyribonucleotide)n-3'-hydroxyl + 5'-phospho-(deoxyribonucleotide)m = (deoxyribonucleotide)n+m + AMP + phosphate.. It catalyses the reaction GTP + (deoxyribonucleotide)n-3'-hydroxyl + 5'-phospho-(deoxyribonucleotide)m = (deoxyribonucleotide)n+m + GMP + diphosphate.. Inhibited by Ca(2+) and Zn(2+). DNA ligase that seals nicks in double-stranded DNA during DNA replication, DNA recombination and DNA repair. Can use both ATP and ADP. The protein is DNA ligase of Staphylothermus marinus (strain ATCC 43588 / DSM 3639 / JCM 9404 / F1).